The chain runs to 229 residues: Protein-L-isoaspartate O-methyltransferase (229 aa).

Residue serine 65 is part of the active site.

Belongs to the methyltransferase superfamily. L-isoaspartyl/D-aspartyl protein methyltransferase family.

The protein resides in the cytoplasm. The enzyme catalyses [protein]-L-isoaspartate + S-adenosyl-L-methionine = [protein]-L-isoaspartate alpha-methyl ester + S-adenosyl-L-homocysteine. Functionally, catalyzes the methyl esterification of L-isoaspartyl residues in peptides and proteins that result from spontaneous decomposition of normal L-aspartyl and L-asparaginyl residues. It plays a role in the repair and/or degradation of damaged proteins. The protein is Protein-L-isoaspartate O-methyltransferase of Chlorobium phaeovibrioides (strain DSM 265 / 1930) (Prosthecochloris vibrioformis (strain DSM 265)).